A 784-amino-acid chain; its full sequence is Cadherin-5 (784 aa).

A signal peptide spans Met1 to Ala25. A propeptide spanning residues Ala26–Arg47 is cleaved from the precursor. 5 consecutive Cadherin domains span residues Asp48 to Phe151, Thr152 to Phe258, Thr259 to Phe372, Gln373 to Pro477, and Glu478 to Gln593. The Extracellular portion of the chain corresponds to Asp48 to Gln599. 2 residues coordinate Ca(2+): Glu58 and Glu59. A glycan (N-linked (GlcNAc...) (complex) asparagine) is linked at Asn61. Residues Asp109 and Glu111 each contribute to the Ca(2+) site. Asn112 is a glycosylation site (N-linked (GlcNAc...) (complex) asparagine). Ca(2+) is bound by residues Asp143, Val144, Asn145, Asp146, and Asn147. The N-linked (GlcNAc...) asparagine glycan is linked to Asn157. The Ca(2+) site is built by Asp177, Asp179, His186, and Asp231. Asn362 carries an N-linked (GlcNAc...) asparagine glycan. Asn442 carries N-linked (GlcNAc...) (complex) asparagine glycosylation. 2 N-linked (GlcNAc...) asparagine glycosylation sites follow: Asn523 and Asn535. Residues Ala600 to Leu620 form a helical membrane-spanning segment. The interval Arg621–Val660 is required for interaction with PALS1. Residues Arg621–Tyr784 are Cytoplasmic-facing.

In terms of assembly, part of a complex composed of AMOTL2, MAGI1 and CDH5, within the complex AMOTL2 acts as a scaffold protein for the interaction of MAGI1 with CDH5. The complex is required for coupling actin fibers to cell junctions in endothelial cells. Within the complex AMOTL2 (via its N-terminus) interacts with CDH5. Interacts (via cadherin 5 domain) with PTPRB. Interacts with TRPC4. Interacts with KRIT1. Interacts with PARD3. Interacts with RTN4 (isoform B). Interacts with PALS1; the interaction promotes PALS1 localization to cell junctions and is required for CDH5-mediated vascular lumen formation and endothelial cell. Interacts with CTNND1/p120-catenin; the interaction controls CADH5 endocytosis. Phosphorylated on tyrosine residues by KDR/VEGFR-2. Dephosphorylated by PTPRB. In terms of processing, O-glycosylated. In terms of tissue distribution, expressed in endothelial cells (at protein level). Expressed in the brain.

It localises to the cell junction. It is found in the adherens junction. Its subcellular location is the cell membrane. The protein resides in the cytoplasm. In terms of biological role, cadherins are calcium-dependent cell adhesion proteins. They preferentially interact with themselves in a homophilic manner in connecting cells; cadherins may thus contribute to the sorting of heterogeneous cell types. This cadherin may play a important role in endothelial cell biology through control of the cohesion and organization of the intercellular junctions. It associates with alpha-catenin forming a link to the cytoskeleton. Plays a role in coupling actin fibers to cell junctions in endothelial cells, via acting as a cell junctional complex anchor for AMOTL2 and MAGI1. Acts in concert with KRIT1 and PALS1 to establish and maintain correct endothelial cell polarity and vascular lumen. These effects are mediated by recruitment and activation of the Par polarity complex and RAP1B. Required for activation of PRKCZ and for the localization of phosphorylated PRKCZ, PARD3, TIAM1 and RAP1B to the cell junction. Associates with CTNND1/p120-catenin to control CADH5 endocytosis. The sequence is that of Cadherin-5 from Homo sapiens (Human).